The following is a 322-amino-acid chain: 6-deoxy-6-sulfo-D-fructose transketolase subunit SqwH (322 aa).

It belongs to the transketolase family. As to quaternary structure, forms a complex with SqwG. The cofactor is thiamine diphosphate.

It carries out the reaction 6-deoxy-6-sulfo-D-fructose + D-glyceraldehyde 3-phosphate = 4-deoxy-4-sulfo-D-erythrose + D-xylulose 5-phosphate. It catalyses the reaction 4-deoxy-4-sulfo-D-erythrulose + D-glyceraldehyde 3-phosphate = sulfoacetaldehyde + D-xylulose 5-phosphate. Part of the sulfo-TK pathway, a D-sulfoquinovose degradation pathway that produces 2-hydroxyethane-1-sulfonate (isethionate). Catalyzes two steps of the pathway: the formation of 4-deoxy-4-sulfoerythrose (SE) and xylulose 5-phosphate from 6-deoxy-6-sulfo-D-fructose (SF) and glyceraldehyde 3-phosphate, and the formation of sulfoacetaldehyde (SA) and xylulose 5-phosphate from 4-deoxy-4-sulfo-D-erythrulose (SEu) and glyceraldehyde 3-phosphate. The sequence is that of 6-deoxy-6-sulfo-D-fructose transketolase subunit SqwH from Clostridium sp. (strain MSTE9).